The primary structure comprises 727 residues: Broad-complex core protein isoforms 1/2/3/4/5 (727 aa).

Residues 32–97 (VDVTLACEGR…IYHGEVNVHQ (66 aa)) enclose the BTB domain. Residues 135–149 (NSGGRTPLNTHTQSL) are compositionally biased toward polar residues. Disordered stretches follow at residues 135–185 (NSGG…SLPS), 218–378 (RGSD…IGDG), 445–496 (INNS…RPTA), 532–583 (PQQQ…ANTP), and 604–626 (STSGSANSSLNNSNSTLNTSGGL). A compositionally biased stretch (low complexity) spans 227–238 (SGAVGSGSNNNS). Positions 281 to 298 (TGNGNSGNGNGNGNGASN) are enriched in gly residues. The segment covering 341–355 (NDEHSNDSTGEHDAN) has biased composition (basic and acidic residues). 3 stretches are compositionally biased toward low complexity: residues 445-460 (INNSITNNNNNNNNNN), 475-495 (TPSPTTTTLTTPTTTTPTRPT), and 533-568 (QQQQQQQQQHQMSQQQQQQQQQQQQQGNSSSGQQQQ). 2 C2H2-type zinc fingers span residues 636 to 659 (FRCNPCNKNLSSLTRLKRHIQNVH) and 666 to 689 (PVCNICKRVYSSLNSLRNHKSIYH). The segment at 694–727 (QPKQEPGVGATQAAANSFYHQQHQQQQLNHHSSS) is disordered. Positions 713–727 (HQQHQQQQLNHHSSS) are enriched in low complexity.

It is found in the nucleus. Broad-complex proteins are required for puffing and transcription of salivary gland late genes during metamorphosis. The protein is Broad-complex core protein isoforms 1/2/3/4/5 (br) of Drosophila melanogaster (Fruit fly).